A 438-amino-acid chain; its full sequence is Succinyl-CoA:glutarate CoA-transferase (438 aa).

The transit peptide at 1–31 directs the protein to the mitochondrion; the sequence is MLATLARVAALRRTCLFSGRGGGRGLWTGRP. D205 functions as the Nucleophile in the catalytic mechanism. The residue at position 394 (K394) is an N6-acetyllysine.

The protein belongs to the CoA-transferase III family. In terms of tissue distribution, highly expressed in kidney. Intermediate expression in liver, skeletal muscle and pancreas. Little to no expression detected in other tissues examined.

Its subcellular location is the mitochondrion. The catalysed reaction is glutarate + succinyl-CoA = glutaryl-CoA + succinate. The enzyme catalyses 3-hydroxy-3-methylglutarate + succinyl-CoA = (3S)-3-hydroxy-3-methylglutaryl-CoA + succinate. It catalyses the reaction 3-hydroxy-3-methylglutarate + glutaryl-CoA = (3S)-3-hydroxy-3-methylglutaryl-CoA + glutarate. It carries out the reaction hexanedioate + glutaryl-CoA = hexanedioyl-CoA + glutarate. The catalysed reaction is itaconate + glutaryl-CoA = itaconyl-CoA + glutarate. The enzyme catalyses itaconate + succinyl-CoA = itaconyl-CoA + succinate. With respect to regulation, inhibited by valsartan and losartan carboxylate. Coenzyme A (CoA) transferase that reversibly catalyzes the transfer of a CoA moiety from a dicarboxyl-CoA to a dicarboxylate in a metabolite recycling process. Displays preference for succinyl-CoA and glutarate-CoA as dicarboxyl-CoA donors and glutarate, succinate, adipate/hexanedioate, itaconate and 3-hydroxy-3-methylglutarate as dicarboxylate acceptors. Acts on intermediates or end products of lysine and tryptophan degradation pathway, in particular catalyzes succinyl-CoA-dependent reesterification of free glutarate into glutaryl-CoA to prevent renal excretion of glutarate. Upon inflammation, may convert macrophage-derived itaconate to itaconyl-CoA in erythroid precursors where it negatively regulates the TCA cycle and heme synthesis to limit erythroid differentiation in the context of stress erythropoiesis. In Homo sapiens (Human), this protein is Succinyl-CoA:glutarate CoA-transferase.